We begin with the raw amino-acid sequence, 186 residues long: Elongation factor P (186 aa).

Lysine 33 is subject to N6-(3,6-diaminohexanoyl)-5-hydroxylysine.

Belongs to the elongation factor P family. In terms of processing, may be beta-lysylated on the epsilon-amino group of Lys-33 by the combined action of EpmA and EpmB, and then hydroxylated on the C5 position of the same residue by EpmC (if this protein is present). Lysylation is critical for the stimulatory effect of EF-P on peptide-bond formation. The lysylation moiety may extend toward the peptidyltransferase center and stabilize the terminal 3-CCA end of the tRNA. Hydroxylation of the C5 position on Lys-33 may allow additional potential stabilizing hydrogen-bond interactions with the P-tRNA.

The protein localises to the cytoplasm. The protein operates within protein biosynthesis; polypeptide chain elongation. In terms of biological role, involved in peptide bond synthesis. Alleviates ribosome stalling that occurs when 3 or more consecutive Pro residues or the sequence PPG is present in a protein, possibly by augmenting the peptidyl transferase activity of the ribosome. Modification of Lys-33 is required for alleviation. This is Elongation factor P from Acidithiobacillus ferrooxidans (strain ATCC 23270 / DSM 14882 / CIP 104768 / NCIMB 8455) (Ferrobacillus ferrooxidans (strain ATCC 23270)).